We begin with the raw amino-acid sequence, 804 residues long: Probable exo-1,4-beta-xylosidase xlnD (804 aa).

Positions 1–17 are cleaved as a signal peptide; it reads MAVAALALLALLPQALG. N-linked (GlcNAc...) asparagine glycans are attached at residues asparagine 20, asparagine 115, asparagine 139, asparagine 234, and asparagine 243. Aspartate 307 is a catalytic residue. N-linked (GlcNAc...) asparagine glycosylation is found at asparagine 349, asparagine 382, asparagine 404, asparagine 433, asparagine 444, asparagine 485, asparagine 489, asparagine 621, asparagine 652, asparagine 666, asparagine 688, and asparagine 710.

Belongs to the glycosyl hydrolase 3 family.

The protein localises to the secreted. The enzyme catalyses Hydrolysis of (1-&gt;4)-beta-D-xylans, to remove successive D-xylose residues from the non-reducing termini.. The protein operates within glycan degradation; xylan degradation. In terms of biological role, xylan 1,4-beta-xylosidase involved in the hydrolysis of xylan, a major structural heterogeneous polysaccharide found in plant biomass representing the second most abundant polysaccharide in the biosphere, after cellulose. This chain is Probable exo-1,4-beta-xylosidase xlnD (xlnD), found in Aspergillus japonicus.